The chain runs to 208 residues: Imidazole glycerol phosphate synthase subunit HisH (208 aa).

The 206-residue stretch at 1 to 206 folds into the Glutamine amidotransferase type-1 domain; the sequence is MIVIIDYDTG…KEVIRSCKSS (206 aa). The active-site Nucleophile is the Cys79. Catalysis depends on residues His181 and Glu183.

In terms of assembly, heterodimer of HisH and HisF.

It is found in the cytoplasm. The catalysed reaction is 5-[(5-phospho-1-deoxy-D-ribulos-1-ylimino)methylamino]-1-(5-phospho-beta-D-ribosyl)imidazole-4-carboxamide + L-glutamine = D-erythro-1-(imidazol-4-yl)glycerol 3-phosphate + 5-amino-1-(5-phospho-beta-D-ribosyl)imidazole-4-carboxamide + L-glutamate + H(+). It carries out the reaction L-glutamine + H2O = L-glutamate + NH4(+). The protein operates within amino-acid biosynthesis; L-histidine biosynthesis; L-histidine from 5-phospho-alpha-D-ribose 1-diphosphate: step 5/9. In terms of biological role, IGPS catalyzes the conversion of PRFAR and glutamine to IGP, AICAR and glutamate. The HisH subunit catalyzes the hydrolysis of glutamine to glutamate and ammonia as part of the synthesis of IGP and AICAR. The resulting ammonia molecule is channeled to the active site of HisF. This chain is Imidazole glycerol phosphate synthase subunit HisH, found in Listeria monocytogenes serotype 4b (strain CLIP80459).